The primary structure comprises 329 residues: Small ribosomal subunit protein RACK1 (329 aa).

WD repeat units lie at residues 19–59, 68–107, 110–149, 154–193, 196–235, 237–275, and 295–328; these read GHNG…ATSP, GHSH…STRL, GHTQ…KFTL, AHQD…CNHT, DHTG…PLYK, EARN…VLAE, and PKAP…KSSS.

This sequence belongs to the WD repeat G protein beta family. Ribosomal protein RACK1 subfamily.

The sequence is that of Small ribosomal subunit protein RACK1 (gpbB) from Dictyostelium discoideum (Social amoeba).